We begin with the raw amino-acid sequence, 278 residues long: 4-deoxy-L-threo-5-hexosulose-uronate ketol-isomerase (278 aa).

Zn(2+) is bound by residues His196, His198, Glu203, and His245.

This sequence belongs to the KduI family. It depends on Zn(2+) as a cofactor.

It carries out the reaction 5-dehydro-4-deoxy-D-glucuronate = 3-deoxy-D-glycero-2,5-hexodiulosonate. The protein operates within glycan metabolism; pectin degradation; 2-dehydro-3-deoxy-D-gluconate from pectin: step 4/5. Functionally, catalyzes the isomerization of 5-dehydro-4-deoxy-D-glucuronate to 3-deoxy-D-glycero-2,5-hexodiulosonate. The protein is 4-deoxy-L-threo-5-hexosulose-uronate ketol-isomerase of Salmonella dublin (strain CT_02021853).